Here is a 178-residue protein sequence, read N- to C-terminus: Probable DNA-directed RNA polymerase subunit delta (178 aa).

Residues 14–81 enclose the HTH HARE-type domain; sequence LSMIEVAHAI…GENTWGLRTW (68 aa). Over residues 120 to 143 the composition is skewed to acidic residues; that stretch reads DDDVIDYDSDDPEDEEVEAEDTTS. Residues 120–178 form a disordered region; it reads DDDVIDYDSDDPEDEEVEAEDTTSDDAPAFEDLSNDDDTDVLPDGIEGQLSELNEDDEN.

This sequence belongs to the RpoE family. In terms of assembly, RNAP is composed of a core of 2 alpha, a beta and a beta' subunits. The core is associated with a delta subunit and one of several sigma factors.

Functionally, participates in both the initiation and recycling phases of transcription. In the presence of the delta subunit, RNAP displays an increased specificity of transcription, a decreased affinity for nucleic acids, and an increased efficiency of RNA synthesis because of enhanced recycling. The protein is Probable DNA-directed RNA polymerase subunit delta of Pediococcus pentosaceus (strain ATCC 25745 / CCUG 21536 / LMG 10740 / 183-1w).